We begin with the raw amino-acid sequence, 131 residues long: L-ectoine synthase (131 aa).

The protein belongs to the ectoine synthase family.

The enzyme catalyses (2S)-4-acetamido-2-aminobutanoate = L-ectoine + H2O. It participates in amine and polyamine biosynthesis; ectoine biosynthesis; L-ectoine from L-aspartate 4-semialdehyde: step 3/3. Its function is as follows. Catalyzes the circularization of gamma-N-acetyl-alpha,gamma-diaminobutyric acid (ADABA) to ectoine (1,4,5,6-tetrahydro-2-methyl-4-pyrimidine carboxylic acid), which is an excellent osmoprotectant. This Bordetella bronchiseptica (strain ATCC BAA-588 / NCTC 13252 / RB50) (Alcaligenes bronchisepticus) protein is L-ectoine synthase.